Reading from the N-terminus, the 277-residue chain is Ubiquinone biosynthesis protein COQ4, mitochondrial (277 aa).

A mitochondrion-targeting transit peptide spans 1-14 (MLTKRALRTTDPYR). Zn(2+) is bound by residues His157, Asp158, His161, and Glu173.

The protein belongs to the COQ4 family. As to quaternary structure, component of a multi-subunit COQ enzyme complex, composed of at least COQ3, COQ4, COQ5, COQ6, COQ7 and COQ9. Zn(2+) is required as a cofactor.

The protein resides in the mitochondrion inner membrane. The catalysed reaction is a 4-hydroxy-3-methoxy-5-(all-trans-polyprenyl)benzoate + H(+) = a 2-methoxy-6-(all-trans-polyprenyl)phenol + CO2. The protein operates within cofactor biosynthesis; ubiquinone biosynthesis. Lyase that catalyzes the C1-decarboxylation of 4-hydroxy-3-methoxy-5-(all-trans-polyprenyl)benzoic acid into 2-methoxy-6-(all-trans-polyprenyl)phenol during ubiquinone biosynthesis. This is Ubiquinone biosynthesis protein COQ4, mitochondrial from Ajellomyces capsulatus (strain NAm1 / WU24) (Darling's disease fungus).